Reading from the N-terminus, the 808-residue chain is Quinoprotein glucose dehydrogenase (808 aa).

The N-terminal stretch at 1-33 is a signal peptide; that stretch reads MSTTSRPGLWALITAAVFALCGAILTVGGAWVA. The next 4 membrane-spanning stretches (helical) occupy residues 35–54, 59–76, 94–108, and 123–138; these read IGGPLYYVILGLALLATAFL, NPAALYLFAVVVFGTVIW, IVIILGIWLLLPFVS, and GAVGVAVLALFASLFT. D470 (proton acceptor) is an active-site residue. Positions 514–545 are disordered; that stretch reads VPAPETPVPQGAAPGDHTSPTQPMSQLTLRPK. Over residues 531-541 the composition is skewed to polar residues; sequence TSPTQPMSQLT.

The protein belongs to the bacterial PQQ dehydrogenase family. Requires pyrroloquinoline quinone as cofactor.

The protein resides in the cell inner membrane. The catalysed reaction is a ubiquinone + D-glucose = D-glucono-1,5-lactone + a ubiquinol. The sequence is that of Quinoprotein glucose dehydrogenase (gdh) from Gluconobacter oxydans (strain 621H) (Gluconobacter suboxydans).